We begin with the raw amino-acid sequence, 400 residues long: ATP-dependent RNA helicase fal-1 (400 aa).

Positions 26–54 (PTFESMSLKESLLRGIYAYGYESPSAVQS) match the Q motif motif. The region spanning 57–227 (IVQICKGRDT…TKFMTDPVRI (171 aa)) is the Helicase ATP-binding domain. 70 to 77 (AQSGTGKT) contributes to the ATP binding site. The DEAD box signature appears at 175–178 (DEAD). Residues 238 to 399 (GLKQYFIAVE…EMPMNVADLI (162 aa)) enclose the Helicase C-terminal domain.

The protein belongs to the DEAD box helicase family. DDX48/FAL1 subfamily.

The protein resides in the nucleus. It is found in the nucleolus. The enzyme catalyses ATP + H2O = ADP + phosphate + H(+). Its function is as follows. ATP-dependent RNA helicase involved in 40S ribosomal subunit biogenesis. Required for the processing and cleavage of 35S pre-rRNA at sites A0, A1, and A2, leading to mature 18S rRNA. This chain is ATP-dependent RNA helicase fal-1 (fal-1), found in Neurospora crassa (strain ATCC 24698 / 74-OR23-1A / CBS 708.71 / DSM 1257 / FGSC 987).